The following is a 410-amino-acid chain: Histidine--tRNA ligase (410 aa).

Belongs to the class-II aminoacyl-tRNA synthetase family.

It is found in the cytoplasm. The catalysed reaction is tRNA(His) + L-histidine + ATP = L-histidyl-tRNA(His) + AMP + diphosphate + H(+). In Methanoregula boonei (strain DSM 21154 / JCM 14090 / 6A8), this protein is Histidine--tRNA ligase.